The chain runs to 86 residues: Small ribosomal subunit protein uS17 (86 aa).

Belongs to the universal ribosomal protein uS17 family. As to quaternary structure, part of the 30S ribosomal subunit.

In terms of biological role, one of the primary rRNA binding proteins, it binds specifically to the 5'-end of 16S ribosomal RNA. The protein is Small ribosomal subunit protein uS17 of Streptococcus gordonii (strain Challis / ATCC 35105 / BCRC 15272 / CH1 / DL1 / V288).